Reading from the N-terminus, the 130-residue chain is Fluoride-specific ion channel FluC (130 aa).

4 helical membrane passes run 7–27, 36–56, 69–89, and 99–119; these read VLAI…LGLW, LGTL…VAVF, ALIT…AEVV, and LGFG…LAGI. The Na(+) site is built by Gly-76 and Thr-79.

It belongs to the fluoride channel Fluc/FEX (TC 1.A.43) family.

The protein resides in the cell inner membrane. The enzyme catalyses fluoride(in) = fluoride(out). Na(+) is not transported, but it plays an essential structural role and its presence is essential for fluoride channel function. Fluoride-specific ion channel. Important for reducing fluoride concentration in the cell, thus reducing its toxicity. The chain is Fluoride-specific ion channel FluC from Albidiferax ferrireducens (strain ATCC BAA-621 / DSM 15236 / T118) (Rhodoferax ferrireducens).